Reading from the N-terminus, the 355-residue chain is DNA polymerase IV (355 aa).

Residues 14–198 (IIHVDMDAFF…LPVEKFHGVG (185 aa)) enclose the UmuC domain. Aspartate 18 and aspartate 116 together coordinate Mg(2+). Residue glutamate 117 is part of the active site.

This sequence belongs to the DNA polymerase type-Y family. In terms of assembly, monomer. Mg(2+) is required as a cofactor.

It is found in the cytoplasm. It catalyses the reaction DNA(n) + a 2'-deoxyribonucleoside 5'-triphosphate = DNA(n+1) + diphosphate. Its function is as follows. Poorly processive, error-prone DNA polymerase involved in untargeted mutagenesis. Copies undamaged DNA at stalled replication forks, which arise in vivo from mismatched or misaligned primer ends. These misaligned primers can be extended by PolIV. Exhibits no 3'-5' exonuclease (proofreading) activity. May be involved in translesional synthesis, in conjunction with the beta clamp from PolIII. This is DNA polymerase IV from Streptococcus suis (strain 98HAH33).